Here is a 571-residue protein sequence, read N- to C-terminus: Proline--tRNA ligase (571 aa).

Belongs to the class-II aminoacyl-tRNA synthetase family. ProS type 1 subfamily. In terms of assembly, homodimer.

The protein localises to the cytoplasm. It catalyses the reaction tRNA(Pro) + L-proline + ATP = L-prolyl-tRNA(Pro) + AMP + diphosphate. In terms of biological role, catalyzes the attachment of proline to tRNA(Pro) in a two-step reaction: proline is first activated by ATP to form Pro-AMP and then transferred to the acceptor end of tRNA(Pro). As ProRS can inadvertently accommodate and process non-cognate amino acids such as alanine and cysteine, to avoid such errors it has two additional distinct editing activities against alanine. One activity is designated as 'pretransfer' editing and involves the tRNA(Pro)-independent hydrolysis of activated Ala-AMP. The other activity is designated 'posttransfer' editing and involves deacylation of mischarged Ala-tRNA(Pro). The misacylated Cys-tRNA(Pro) is not edited by ProRS. This is Proline--tRNA ligase from Shewanella baltica (strain OS195).